Reading from the N-terminus, the 285-residue chain is UPF0354 protein MW1686 (285 aa).

Belongs to the UPF0354 family.

The sequence is that of UPF0354 protein MW1686 from Staphylococcus aureus (strain MW2).